Consider the following 680-residue polypeptide: Glutamine-dependent NAD(+) synthetase (680 aa).

Positions 12–276 (VRVAACTHHA…EHRSVADVDT (265 aa)) constitute a CN hydrolase domain. The Proton acceptor; for glutaminase activity role is filled by E52. K121 serves as the catalytic For glutaminase activity. Residue Y127 participates in L-glutamine binding. C176 acts as the Nucleophile; for glutaminase activity in catalysis. L-glutamine contacts are provided by S203 and R209. 366–373 (GVSGGLDS) serves as a coordination point for ATP. Position 456 (N456) interacts with deamido-NAD(+). Position 480 (T480) interacts with ATP. Deamido-NAD(+)-binding positions include E485, 490–493 (WSTY), and K636.

It in the C-terminal section; belongs to the NAD synthetase family.

It carries out the reaction deamido-NAD(+) + L-glutamine + ATP + H2O = L-glutamate + AMP + diphosphate + NAD(+) + H(+). The protein operates within cofactor biosynthesis; NAD(+) biosynthesis; NAD(+) from deamido-NAD(+) (L-Gln route): step 1/1. Functionally, catalyzes the ATP-dependent amidation of deamido-NAD to form NAD. Uses L-glutamine as a nitrogen source. The polypeptide is Glutamine-dependent NAD(+) synthetase (Mycobacterium leprae (strain TN)).